A 302-amino-acid polypeptide reads, in one-letter code: Glycine--tRNA ligase alpha subunit (302 aa).

It belongs to the class-II aminoacyl-tRNA synthetase family. Tetramer of two alpha and two beta subunits.

Its subcellular location is the cytoplasm. It catalyses the reaction tRNA(Gly) + glycine + ATP = glycyl-tRNA(Gly) + AMP + diphosphate. This Xanthomonas oryzae pv. oryzae (strain PXO99A) protein is Glycine--tRNA ligase alpha subunit.